Here is a 373-residue protein sequence, read N- to C-terminus: Probable jasmonic acid carboxyl methyltransferase 2 (373 aa).

Residue Tyr18 coordinates S-adenosyl-L-homocysteine. Position 25 (Gln25) interacts with jasmonate. The S-adenosyl-L-homocysteine site is built by Cys59, Asn64, Asp96, Leu97, Ser135, and Phe136. 2 residues coordinate jasmonate: His156 and Trp157. Residues Asn174, Asp260, Phe262, and Asn263 each contribute to the Mg(2+) site.

The protein belongs to the methyltransferase superfamily. Type-7 methyltransferase family. Mg(2+) is required as a cofactor.

The protein localises to the cytoplasm. Its subcellular location is the nucleus. It catalyses the reaction jasmonate + S-adenosyl-L-methionine = methyl (-)-jasmonate + S-adenosyl-L-homocysteine. It participates in lipid metabolism; oxylipin biosynthesis. Catalyzes the methylation of jasmonate into methyljasmonate, a plant volatile that acts as an important cellular regulator mediating diverse developmental processes and defense responses. The polypeptide is Probable jasmonic acid carboxyl methyltransferase 2 (Theobroma cacao (Cacao)).